The chain runs to 209 residues: Ion-translocating oxidoreductase complex subunit G (209 aa).

Residues 9–29 (GLILAVFACVSTGLVALTYAL) form a helical membrane-spanning segment. Residue Thr-175 is modified to FMN phosphoryl threonine.

It belongs to the RnfG family. As to quaternary structure, the complex is composed of six subunits: RnfA, RnfB, RnfC, RnfD, RnfE and RnfG. The cofactor is FMN.

It is found in the cell inner membrane. In terms of biological role, part of a membrane-bound complex that couples electron transfer with translocation of ions across the membrane. The sequence is that of Ion-translocating oxidoreductase complex subunit G from Vibrio cholerae serotype O1 (strain ATCC 39315 / El Tor Inaba N16961).